Reading from the N-terminus, the 666-residue chain is Calpain-10 (666 aa).

The Calpain catalytic domain maps to 13–321; sequence LFRDAAFPAS…FDEVTIGYPV (309 aa). Catalysis depends on residues Cys-73, His-238, and Asn-263. Domain III regions lie at residues 322–488 and 507–648; these read TEAG…ISLS and EWET…IHSQ.

This sequence belongs to the peptidase C2 family.

Its function is as follows. Calcium-regulated non-lysosomal thiol-protease which catalyzes limited proteolysis of substrates involved in cytoskeletal remodeling and signal transduction. May play a role in insulin-stimulated glucose uptake. This is Calpain-10 (Capn10) from Mus musculus (Mouse).